Reading from the N-terminus, the 154-residue chain is Methylglyoxal synthase (154 aa).

The region spanning 6–154 (QSLPAKKNIA…KYLATRQIDI (149 aa)) is the MGS-like domain. Residues His-19, Lys-23, 45-48 (TGTT), and 65-66 (SG) each bind substrate. Asp-71 serves as the catalytic Proton donor/acceptor. His-98 is a binding site for substrate.

The protein belongs to the methylglyoxal synthase family.

It carries out the reaction dihydroxyacetone phosphate = methylglyoxal + phosphate. Catalyzes the formation of methylglyoxal from dihydroxyacetone phosphate. The sequence is that of Methylglyoxal synthase from Pseudoalteromonas translucida (strain TAC 125).